A 197-amino-acid chain; its full sequence is ATP-dependent Clp protease proteolytic subunit (197 aa).

The active-site Nucleophile is S97. H122 is a catalytic residue.

This sequence belongs to the peptidase S14 family. As to quaternary structure, fourteen ClpP subunits assemble into 2 heptameric rings which stack back to back to give a disk-like structure with a central cavity, resembling the structure of eukaryotic proteasomes.

It is found in the cytoplasm. It catalyses the reaction Hydrolysis of proteins to small peptides in the presence of ATP and magnesium. alpha-casein is the usual test substrate. In the absence of ATP, only oligopeptides shorter than five residues are hydrolyzed (such as succinyl-Leu-Tyr-|-NHMec, and Leu-Tyr-Leu-|-Tyr-Trp, in which cleavage of the -Tyr-|-Leu- and -Tyr-|-Trp bonds also occurs).. Its function is as follows. Cleaves peptides in various proteins in a process that requires ATP hydrolysis. Has a chymotrypsin-like activity. Plays a major role in the degradation of misfolded proteins. The protein is ATP-dependent Clp protease proteolytic subunit of Trichlorobacter lovleyi (strain ATCC BAA-1151 / DSM 17278 / SZ) (Geobacter lovleyi).